Consider the following 350-residue polypeptide: Arginine/serine-rich coiled-coil protein 2 (350 aa).

Disordered regions lie at residues 1–146 and 328–350; these read MIRT…FRGR and SQTH…MDAV. Positions 10-24 are enriched in basic residues; it reads QARRHEVKAKSSKKH. A compositionally biased stretch (basic and acidic residues) spans 25–51; the sequence is RSDDTVDRDHSDKIRDRLNSSENGDEK. Basic residues predominate over residues 52-132; it reads HRRKEKRSSR…IEKPRRHSRS (81 aa). The stretch at 146 to 187 forms a coiled coil; that stretch reads RNAAMDAQEALARRLERAKKLQEQREKESAEKQQEIAAVAAA.

Belongs to the RSRC2 family.

The protein is Arginine/serine-rich coiled-coil protein 2 (rsrc2) of Xenopus laevis (African clawed frog).